Consider the following 248-residue polypeptide: Phosphate import ATP-binding protein PstB (248 aa).

Residues 1–243 (MAVNDVNVFY…PQHNLTQGYI (243 aa)) enclose the ABC transporter domain. An ATP-binding site is contributed by 33 to 40 (GPSGCGKS).

Belongs to the ABC transporter superfamily. Phosphate importer (TC 3.A.1.7) family. The complex is composed of two ATP-binding proteins (PstB), two transmembrane proteins (PstC and PstA) and a solute-binding protein (PstS).

It is found in the cell inner membrane. The enzyme catalyses phosphate(out) + ATP + H2O = ADP + 2 phosphate(in) + H(+). Its function is as follows. Part of the ABC transporter complex PstSACB involved in phosphate import. Responsible for energy coupling to the transport system. This Rhodospirillum rubrum (strain ATCC 11170 / ATH 1.1.1 / DSM 467 / LMG 4362 / NCIMB 8255 / S1) protein is Phosphate import ATP-binding protein PstB.